The chain runs to 155 residues: Small ribosomal subunit protein uS17 (155 aa).

Residue Ala2 is modified to N-acetylalanine.

It belongs to the universal ribosomal protein uS17 family.

This chain is Small ribosomal subunit protein uS17, found in Drosophila pseudoobscura pseudoobscura (Fruit fly).